The primary structure comprises 216 residues: Small ribosomal subunit protein uS3c (216 aa).

One can recognise a KH type-2 domain in the interval 43-118 (IKNYIQKNRR…KLNIAIVKVT (76 aa)).

Belongs to the universal ribosomal protein uS3 family. In terms of assembly, part of the 30S ribosomal subunit.

The protein resides in the plastid. Its subcellular location is the chloroplast. In Phaseolus angularis (Azuki bean), this protein is Small ribosomal subunit protein uS3c (rps3).